Consider the following 363-residue polypeptide: Phosphoribosylformylglycinamidine cyclo-ligase (363 aa).

The protein belongs to the AIR synthase family.

It localises to the cytoplasm. It carries out the reaction 2-formamido-N(1)-(5-O-phospho-beta-D-ribosyl)acetamidine + ATP = 5-amino-1-(5-phospho-beta-D-ribosyl)imidazole + ADP + phosphate + H(+). Its pathway is purine metabolism; IMP biosynthesis via de novo pathway; 5-amino-1-(5-phospho-D-ribosyl)imidazole from N(2)-formyl-N(1)-(5-phospho-D-ribosyl)glycinamide: step 2/2. The chain is Phosphoribosylformylglycinamidine cyclo-ligase from Parvibaculum lavamentivorans (strain DS-1 / DSM 13023 / NCIMB 13966).